Here is a 216-residue protein sequence, read N- to C-terminus: Cytochrome c biogenesis ATP-binding export protein CcmA (216 aa).

The ABC transporter domain occupies leucine 2–glycine 215. Glycine 34–threonine 41 lines the ATP pocket.

Belongs to the ABC transporter superfamily. CcmA exporter (TC 3.A.1.107) family. In terms of assembly, the complex is composed of two ATP-binding proteins (CcmA) and two transmembrane proteins (CcmB).

It is found in the cell inner membrane. It catalyses the reaction heme b(in) + ATP + H2O = heme b(out) + ADP + phosphate + H(+). In terms of biological role, part of the ABC transporter complex CcmAB involved in the biogenesis of c-type cytochromes; once thought to export heme, this seems not to be the case, but its exact role is uncertain. Responsible for energy coupling to the transport system. The polypeptide is Cytochrome c biogenesis ATP-binding export protein CcmA (Photobacterium profundum (strain SS9)).